Reading from the N-terminus, the 466-residue chain is Asparagine--tRNA ligase (466 aa).

The protein belongs to the class-II aminoacyl-tRNA synthetase family. In terms of assembly, homodimer.

It localises to the cytoplasm. It catalyses the reaction tRNA(Asn) + L-asparagine + ATP = L-asparaginyl-tRNA(Asn) + AMP + diphosphate + H(+). The sequence is that of Asparagine--tRNA ligase from Buchnera aphidicola subsp. Schizaphis graminum (strain Sg).